A 592-amino-acid polypeptide reads, in one-letter code: Protein kinase C zeta type (592 aa).

The PB1 domain occupies 15–98 (RVRLKAHYGG…EVLIIHVFPS (84 aa)). Residues 79–145 (AFRLVCQGRD…KRFNRGAYCG (67 aa)) are interaction with SQSTM1. Residues 130 to 180 (GHLFQAKRFNRGAYCGQCSERIWGLSRQGYRCINCKLLVHKRCHVLVPLTC) form a Phorbol-ester/DAG-type zinc finger. The Protein kinase domain occupies 252–518 (FDLIRVIGRG…FSDIKSHAFF (267 aa)). Residues 258 to 266 (IGRGSYAKV) and lysine 281 each bind ATP. Aspartate 376 (proton acceptor) is an active-site residue. A Phosphothreonine; by PDPK1 and PI3K modification is found at threonine 410. The AGC-kinase C-terminal domain maps to 519 to 590 (RSIDWDLLEK…INPLLLSAEE (72 aa)). Threonine 560 bears the Phosphothreonine mark. Serine 591 carries the phosphoserine modification.

It belongs to the protein kinase superfamily. AGC Ser/Thr protein kinase family. PKC subfamily. In terms of assembly, interacts directly with SQSTM1. Forms a ternary complex with SQSTM1 and KCNAB2. Forms another ternary complex with SQSTM1 and GABRR3. Forms a complex with SQSTM1 and MAP2K5. Interacts with PARD6A, PARD6B and PARD6G. Part of a complex with PARD3, PARD6A or PARD6B or PARD6G and CDC42 or RAC1. Interacts with ADAP1/CENTA1. Interacts (via the protein kinase domain) with WWC1. Forms a tripartite complex with WWC1 and DDR1, but predominantly in the absence of collagen. Interacts with PDPK1 (via N-terminal region). Interacts with WDFY2 (via WD repeats 1-3). Interacts with VAMP2. Forms a complex with WDFY2 and VAMP2. Interacts with APPL1. Interacts with WWC1, WWC2 and WWC3. In terms of processing, CDH5 is required for its phosphorylation at Thr-410. Phosphorylated by protein kinase PDPK1; phosphorylation is inhibited by the apoptotic C-terminal cleavage product of PKN2. Phosphorylation at Thr-410 by PI3K activates the kinase. In terms of tissue distribution, isoform 1: In brain, highly expressed in cerebellar granule neurons and cerebellar astrocytes (at protein level). Expressed at low levels in testes, lung and kidney. Isoform 2: Specifically expressed in brain where it localizes to cerebellar granule neurons (at protein level).

It is found in the cytoplasm. The protein resides in the endosome. Its subcellular location is the cell junction. The protein localises to the membrane. The catalysed reaction is L-seryl-[protein] + ATP = O-phospho-L-seryl-[protein] + ADP + H(+). It carries out the reaction L-threonyl-[protein] + ATP = O-phospho-L-threonyl-[protein] + ADP + H(+). Atypical PKCs (PRKCI and PRKCZ) exhibit an elevated basal enzymatic activity (that may be due to the interaction with SMG1 or SQSTM1) and are not regulated by diacylglycerol, phosphatidylserine, phorbol esters or calcium ions. Two specific sites, Thr-410 (activation loop of the kinase domain) and Thr-560 (turn motif), need to be phosphorylated for its full activation. Phosphatidylinositol 3,4,5-trisphosphate might be a physiological activator. Isoform 2: Constitutively active. Calcium- and diacylglycerol-independent serine/threonine-protein kinase that functions in phosphatidylinositol 3-kinase (PI3K) pathway and mitogen-activated protein (MAP) kinase cascade, and is involved in NF-kappa-B activation, mitogenic signaling, cell proliferation, cell polarity, inflammatory response and maintenance of long-term potentiation (LTP). Upon lipopolysaccharide (LPS) treatment in macrophages, or following mitogenic stimuli, functions downstream of PI3K to activate MAP2K1/MEK1-MAPK1/ERK2 signaling cascade independently of RAF1 activation. Required for insulin-dependent activation of AKT3, but may function as an adapter rather than a direct activator. Upon insulin treatment may act as a downstream effector of PI3K and contribute to the activation of translocation of the glucose transporter SLC2A4/GLUT4 and subsequent glucose transport in adipocytes. In EGF-induced cells, binds and activates MAP2K5/MEK5-MAPK7/ERK5 independently of its kinase activity and can activate JUN promoter through MEF2C. Through binding with SQSTM1/p62, functions in interleukin-1 signaling and activation of NF-kappa-B with the specific adapters RIPK1 and TRAF6. Participates in TNF-dependent transactivation of NF-kappa-B by phosphorylating and activating IKBKB kinase, which in turn leads to the degradation of NF-kappa-B inhibitors. In migrating astrocytes, forms a cytoplasmic complex with PARD6A and is recruited by CDC42 to function in the establishment of cell polarity along with the microtubule motor and dynein. In association with FEZ1, stimulates neuronal differentiation in PC12 cells. In the inflammatory response, is required for the T-helper 2 (Th2) differentiation process, including interleukin production, efficient activation of JAK1 and the subsequent phosphorylation and nuclear translocation of STAT6. May be involved in development of allergic airway inflammation (asthma), a process dependent on Th2 immune response. In the NF-kappa-B-mediated inflammatory response, can relieve SETD6-dependent repression of NF-kappa-B target genes by phosphorylating the RELA subunit at 'Ser-311'. Phosphorylates VAMP2 in vitro. Phosphorylates and activates LRRK1, which phosphorylates RAB proteins involved in intracellular trafficking. Functionally, involved in late synaptic long term potentiation phase in CA1 hippocampal cells and long term memory maintenance. The polypeptide is Protein kinase C zeta type (Prkcz) (Mus musculus (Mouse)).